Here is a 569-residue protein sequence, read N- to C-terminus: MRTSQYLLSTLKETPANAEVISHQLMLRAGLVRNLASGLYTWLPTGLRVLKKVEQIVREEMQRAGGNEILMPMVQPADLWQESGRLDDYGPELLRINDRHKRPFVLGPTHEEVVTKLVANELSSYKQLPLNVFQIQSKFRDEIRPRFGVMRGREFLMKDAYSFHLEDECLEKTYQIMFDAYCRIFERLELNFRPVLADTGSIGGEKSHEFHVLADSGEDDIAFSDASDFAANIEKAEALAPAGERAEPTQTLTKVATPNVKSMDDLVQCLSVDLKTTVKTLLVVGATVEGEAETVVALVLRGDHQLNEIKAEHLPQVATPITFASEEQILAAANCNAGSIGPVGLNIEVIVDRSAAHLSDFVCGANEDDAHLTGVNWQRDCNEISVHDIRNVVAGDPSPCGQGNIEIKRGIEVGHIFQLGRKYAEAMNCAVLNEGGKNQTLTMGCYGIGVSRIVAAAIEQNHDKYGIKWPKAIAPFQVAIVPMNMAKSARVKETAEALYESLNQAGIEVLFDDRKERPGVMFADHELMGTPLLLIIGERNLDAQQIELKNRITGEKSLIAIDEVMSLFN.

The protein belongs to the class-II aminoacyl-tRNA synthetase family. ProS type 1 subfamily. As to quaternary structure, homodimer.

Its subcellular location is the cytoplasm. It catalyses the reaction tRNA(Pro) + L-proline + ATP = L-prolyl-tRNA(Pro) + AMP + diphosphate. Functionally, catalyzes the attachment of proline to tRNA(Pro) in a two-step reaction: proline is first activated by ATP to form Pro-AMP and then transferred to the acceptor end of tRNA(Pro). As ProRS can inadvertently accommodate and process non-cognate amino acids such as alanine and cysteine, to avoid such errors it has two additional distinct editing activities against alanine. One activity is designated as 'pretransfer' editing and involves the tRNA(Pro)-independent hydrolysis of activated Ala-AMP. The other activity is designated 'posttransfer' editing and involves deacylation of mischarged Ala-tRNA(Pro). The misacylated Cys-tRNA(Pro) is not edited by ProRS. The chain is Proline--tRNA ligase from Colwellia psychrerythraea (strain 34H / ATCC BAA-681) (Vibrio psychroerythus).